The chain runs to 366 residues: UDP-N-acetylenolpyruvoylglucosamine reductase (366 aa).

The 175-residue stretch at 29 to 203 folds into the FAD-binding PCMH-type domain; sequence VGPVARTLVT…LEVEFALDAS (175 aa). R177 is a catalytic residue. S258 functions as the Proton donor in the catalytic mechanism. The active site involves E358.

This sequence belongs to the MurB family. It depends on FAD as a cofactor.

It localises to the cytoplasm. It carries out the reaction UDP-N-acetyl-alpha-D-muramate + NADP(+) = UDP-N-acetyl-3-O-(1-carboxyvinyl)-alpha-D-glucosamine + NADPH + H(+). It participates in cell wall biogenesis; peptidoglycan biosynthesis. Its function is as follows. Cell wall formation. This is UDP-N-acetylenolpyruvoylglucosamine reductase from Mycobacterium ulcerans (strain Agy99).